The sequence spans 160 residues: Nucleotide-binding protein MADE_1020535 (160 aa).

This sequence belongs to the YajQ family.

Its function is as follows. Nucleotide-binding protein. This chain is Nucleotide-binding protein MADE_1020535, found in Alteromonas mediterranea (strain DSM 17117 / CIP 110805 / LMG 28347 / Deep ecotype).